The following is a 492-amino-acid chain: Cytoplasmic dynein 1 light intermediate chain 2 (492 aa).

61–68 (GEDGSGKT) contributes to the ATP binding site. Disordered regions lie at residues 187 to 206 (PEEGCQGSPQRRGPLTSGSD), 371 to 423 (AKQP…KNNA), and 437 to 492 (LSKK…ENEA). A Phosphoserine modification is found at S194. Polar residues predominate over residues 371–381 (AKQPATPTRAS). Phosphoserine is present on residues S383 and S391. At R397 the chain carries Omega-N-methylarginine. Residues 400-412 (PASVPSSSPGTSV) are compositionally biased toward low complexity. Position 441 is a phosphothreonine (T441). Phosphoserine is present on residues S443 and S446. Over residues 452 to 469 (VQSTAKKSGQKTVLSNVQ) the composition is skewed to polar residues. Basic and acidic residues predominate over residues 471-480 (ELDRMTRKPD). Residues 482–492 (MVTNSSTENEA) show a composition bias toward polar residues.

It belongs to the dynein light intermediate chain family. As to quaternary structure, homodimer. The cytoplasmic dynein 1 complex consists of two catalytic heavy chains (HCs) and a number of non-catalytic subunits presented by intermediate chains (ICs), light intermediate chains (LICs) and light chains (LCs); the composition seems to vary in respect to the IC, LIC and LC composition. The heavy chain homodimer serves as a scaffold for the probable homodimeric assembly of the respective non-catalytic subunits. The ICs and LICs bind directly to the HC dimer and the LCs assemble on the IC dimer. Interacts with DYNC1H1; DYNC1LI1 and DYNC1LI2 bind mutually exclusive to DYNC1H.

It localises to the cytoplasm. The protein localises to the cytoskeleton. Functionally, acts as one of several non-catalytic accessory components of the cytoplasmic dynein 1 complex that are thought to be involved in linking dynein to cargos and to adapter proteins that regulate dynein function. Cytoplasmic dynein 1 acts as a motor for the intracellular retrograde motility of vesicles and organelles along microtubules. May play a role in binding dynein to membranous organelles or chromosomes. The polypeptide is Cytoplasmic dynein 1 light intermediate chain 2 (Homo sapiens (Human)).